A 1013-amino-acid chain; its full sequence is NHS-like protein 3 (1013 aa).

Lys17 is subject to Phosphoserine. The tract at residues 20–195 is disordered; that stretch reads SAKAESDNRQ…PPGSRDAVRI (176 aa). Over residues 73 to 89 the composition is skewed to basic and acidic residues; the sequence is QHQERQKLSKGGWDHGD. Polar residues-rich tracts occupy residues 90-99 and 106-120; these read TQSIQSSQTG and SIYS…SSTA. Ser92 is modified (phosphoserine). A Phosphotyrosine modification is found at Tyr108. Phosphoserine is present on residues Ser136, Ser143, and Ser159. Phosphothreonine is present on Thr160. Over residues 168-178 the composition is skewed to basic and acidic residues; it reads VQKELGLRNNR. At Ser213 the chain carries Phosphoserine. An Asymmetric dimethylarginine modification is found at Arg318. Ser320, Ser325, Ser328, Ser336, Ser337, Ser339, and Ser340 each carry phosphoserine. The tract at residues 330-1013 is disordered; it reads RSLGRFSSAS…PGSDPQKKLV (684 aa). Over residues 336-361 the composition is skewed to low complexity; sequence SSASSPRPRSRNASSSSDNWSHSQSS. The segment covering 362-375 has biased composition (polar residues); it reads ETIVSDGSTLSSKG. Phosphoserine is present on residues Ser398, Ser402, and Ser407. Over residues 408–427 the composition is skewed to polar residues; that stretch reads TAETSDTASIRSSGQLSGRS. Low complexity-rich tracts occupy residues 484–493 and 515–530; these read VGAVSCPPSS and RTLS…SGTP. Thr529 bears the Phosphothreonine mark. A Phosphoserine modification is found at Ser543. The span at 564–577 shows a compositional bias: low complexity; the sequence is SVSSSLTSLCSSSS. Thr591 is modified (phosphothreonine). Pro residues predominate over residues 600–614; the sequence is PPHPKVPAPFSPPPS. Position 610 is a phosphoserine (Ser610). Low complexity predominate over residues 615 to 633; it reads KSKSSNQAAPVLAAPAVAP. Residues 635–657 are compositionally biased toward polar residues; it reads QVSTIDTSPASPSMPQTTLTPAQ. Phosphoserine occurs at positions 667 and 671. Composition is skewed to pro residues over residues 668–683 and 706–716; these read PPPS…PPPT and PSWPPPPPPAP. Basic and acidic residues predominate over residues 779–795; that stretch reads PQKDSVGKHSGAPREDS. The span at 814–829 shows a compositional bias: polar residues; it reads GASTGIPNPSPGSSAP. Phosphoserine occurs at positions 838, 842, and 848. Over residues 859–873 the composition is skewed to low complexity; it reads ASSLAASESPASALP. Residues Ser909, Ser952, and Ser959 each carry the phosphoserine modification. Residues 942-961 show a composition bias toward pro residues; it reads KAPPPVARKPSVGVPPPSPS. Polar residues predominate over residues 964–975; the sequence is RTESLTAPSTNG.

Able to directly activate the TNF-NFkappaB signaling pathway. The polypeptide is NHS-like protein 3 (Nhsl3) (Mus musculus (Mouse)).